The chain runs to 127 residues: Aspartate 1-decarboxylase (127 aa).

Ser25 acts as the Schiff-base intermediate with substrate; via pyruvic acid in catalysis. At Ser25 the chain carries Pyruvic acid (Ser). Thr57 contributes to the substrate binding site. The Proton donor role is filled by Tyr58. 73–75 contributes to the substrate binding site; sequence GAA.

The protein belongs to the PanD family. Heterooctamer of four alpha and four beta subunits. Requires pyruvate as cofactor. Is synthesized initially as an inactive proenzyme, which is activated by self-cleavage at a specific serine bond to produce a beta-subunit with a hydroxyl group at its C-terminus and an alpha-subunit with a pyruvoyl group at its N-terminus.

The protein localises to the cytoplasm. The enzyme catalyses L-aspartate + H(+) = beta-alanine + CO2. It functions in the pathway cofactor biosynthesis; (R)-pantothenate biosynthesis; beta-alanine from L-aspartate: step 1/1. Its function is as follows. Catalyzes the pyruvoyl-dependent decarboxylation of aspartate to produce beta-alanine. The chain is Aspartate 1-decarboxylase from Neisseria meningitidis serogroup C / serotype 2a (strain ATCC 700532 / DSM 15464 / FAM18).